The primary structure comprises 215 residues: Adenylate kinase (215 aa).

Residue 10–15 coordinates ATP; the sequence is GTGKGT. The tract at residues 30 to 59 is NMP; the sequence is STGDMLRESVVLKNKIGMIIKNIIEEGKLV. Residues Thr-31, Arg-36, 57–59, 85–88, and Gln-92 contribute to the AMP site; these read KLV and GFPR. The LID stretch occupies residues 122–159; sequence GRRIHIQSGRIYHVKFKPPKIKDKDDLTGQTLITRKDD. ATP is bound by residues Arg-123 and 132–133; that span reads IY. The AMP site is built by Arg-156 and Arg-167. Leu-200 contributes to the ATP binding site.

This sequence belongs to the adenylate kinase family. In terms of assembly, monomer.

It localises to the cytoplasm. It carries out the reaction AMP + ATP = 2 ADP. It participates in purine metabolism; AMP biosynthesis via salvage pathway; AMP from ADP: step 1/1. Functionally, catalyzes the reversible transfer of the terminal phosphate group between ATP and AMP. Plays an important role in cellular energy homeostasis and in adenine nucleotide metabolism. The chain is Adenylate kinase from Buchnera aphidicola subsp. Acyrthosiphon pisum (strain 5A).